The primary structure comprises 417 residues: Peptidyl-Asp metalloendopeptidase (417 aa).

Residues 1–23 (MKSKSMCTTVGLIAMCLAGSAAA) form the signal peptide. His-331 lines the Zn(2+) pocket. Glu-332 is a catalytic residue. His-335 and His-341 together coordinate Zn(2+).

This sequence belongs to the peptidase M72 family. The cofactor is Zn(2+).

It carries out the reaction Cleavage of Xaa-|-Asp, Xaa-|-Glu and Xaa-|-cysteic acid bonds.. In terms of biological role, metalloprotease, specifically cleaves on the N-terminal side of aspartyl, glutamyl and cysteic acid residues. This chain is Peptidyl-Asp metalloendopeptidase, found in Xanthomonas campestris pv. campestris (strain ATCC 33913 / DSM 3586 / NCPPB 528 / LMG 568 / P 25).